We begin with the raw amino-acid sequence, 301 residues long: Acetyl-coenzyme A carboxylase carboxyl transferase subunit beta (301 aa).

In terms of domain architecture, CoA carboxyltransferase N-terminal spans 25–294 (LWIKDPSTGE…NSDAPAPQKP (270 aa)).

Belongs to the AccD/PCCB family. In terms of assembly, acetyl-CoA carboxylase is a heterohexamer composed of biotin carboxyl carrier protein (AccB), biotin carboxylase (AccC) and two subunits each of ACCase subunit alpha (AccA) and ACCase subunit beta (AccD).

The protein localises to the cytoplasm. The catalysed reaction is N(6)-carboxybiotinyl-L-lysyl-[protein] + acetyl-CoA = N(6)-biotinyl-L-lysyl-[protein] + malonyl-CoA. It participates in lipid metabolism; malonyl-CoA biosynthesis; malonyl-CoA from acetyl-CoA: step 1/1. In terms of biological role, component of the acetyl coenzyme A carboxylase (ACC) complex. Biotin carboxylase (BC) catalyzes the carboxylation of biotin on its carrier protein (BCCP) and then the CO(2) group is transferred by the transcarboxylase to acetyl-CoA to form malonyl-CoA. This chain is Acetyl-coenzyme A carboxylase carboxyl transferase subunit beta, found in Brucella abortus (strain 2308).